A 360-amino-acid polypeptide reads, in one-letter code: Phospho-N-acetylmuramoyl-pentapeptide-transferase (360 aa).

Helical transmembrane passes span 26 to 46 (AILG…KLIE), 74 to 94 (MGGL…GDLG), 97 to 117 (YVWV…IDDY), 134 to 154 (YILQ…TAAN), 168 to 188 (VMPQ…VGSS), 199 to 219 (GLAI…AYLS), 236 to 256 (SGEL…FLWF), 263 to 283 (VFMG…IAVL), 288 to 308 (ILLV…ILQV), and 338 to 358 (VIVR…ATLK).

The protein belongs to the glycosyltransferase 4 family. MraY subfamily. Mg(2+) is required as a cofactor.

It localises to the cell inner membrane. It catalyses the reaction UDP-N-acetyl-alpha-D-muramoyl-L-alanyl-gamma-D-glutamyl-meso-2,6-diaminopimeloyl-D-alanyl-D-alanine + di-trans,octa-cis-undecaprenyl phosphate = di-trans,octa-cis-undecaprenyl diphospho-N-acetyl-alpha-D-muramoyl-L-alanyl-D-glutamyl-meso-2,6-diaminopimeloyl-D-alanyl-D-alanine + UMP. The protein operates within cell wall biogenesis; peptidoglycan biosynthesis. Functionally, catalyzes the initial step of the lipid cycle reactions in the biosynthesis of the cell wall peptidoglycan: transfers peptidoglycan precursor phospho-MurNAc-pentapeptide from UDP-MurNAc-pentapeptide onto the lipid carrier undecaprenyl phosphate, yielding undecaprenyl-pyrophosphoryl-MurNAc-pentapeptide, known as lipid I. The sequence is that of Phospho-N-acetylmuramoyl-pentapeptide-transferase from Shewanella baltica (strain OS195).